The following is a 279-amino-acid chain: Apolipoprotein L domain-containing protein 1 (279 aa).

The next 3 helical transmembrane spans lie at 83 to 105 (SLVA…IVGL), 122 to 142 (GLGV…SLIF), and 192 to 212 (IALY…FLIP). Residues 226 to 253 (LKAKIQKLAESLESCTGALDELSEQLES) adopt a coiled-coil conformation.

The protein belongs to the apolipoprotein L family. Expressed in neonatal dermal microvascular endothelial cells.

It is found in the cell membrane. It localises to the cell junction. The protein localises to the cytoplasmic vesicle. The protein resides in the secretory vesicle. Functionally, is a modulator of endothelial barrier permeability, required for proper organization of endothelial cell-cell junctions and cytoskeleton. It also plays a role in the modulation of secretory autophagy. May affect blood-brain barrier permeability. This is Apolipoprotein L domain-containing protein 1 (APOLD1) from Homo sapiens (Human).